The following is a 554-amino-acid chain: MPQLNSGGGDELGANDELIRFKDEGEQEEKSPGEGSAEGDLADVKSSLVNESENHSSDSDSEVERRPPPREAFEKHRDYLTEALRRQQDAAFFKGPPYAGYPFLMIPDLGGHYLPNGALSPSARTYLQMKWPLLDSPSTAGLKDARSPSPAHLSNKVPVVQHPHHMHPLTPLITYSNEHFSPGTPPGHLSPEIDPKTGIPRPPHPSELSPYYPLSPGAVGQIPHPLGWLVPPQGQPMYSIPPGGFRHPYPALAMNASMSSLVSSRFSPHMVPPPHHSLHTSGIPHPAIVSPIVKQEPSSGNISPNLHTKSNMIVKKEEEKKPHIKKPLNAFMLYMKEMRAKVVAECTLKESAAINQILGRRWHSLSREEQAKYYELARKERQLHSQLYPSWSARDNYGKRKKRKREKQSPEMETHTKTKKMCVQHLPADKSCDSPASSHGSMLDSPATPSAALASPAAPAATHSEQAQPLSLTTKPEARAQLSLSHSAAFLASKSPSSSSFSGHLSSPVGSPLLSRPIPLTSSILSPSGVFPSALQALPLLQAQPLSLVTKSSD.

Residues 1 to 11 (MPQLNSGGGDE) are compositionally biased toward gly residues. The interval 1–61 (MPQLNSGGGD…SENHSSDSDS (61 aa)) is interaction with CTNNB1-A. 3 disordered regions span residues 1-73 (MPQL…REAF), 183-213 (GTPP…PYYP), and 391-475 (WSAR…LTTK). Basic and acidic residues-rich tracts occupy residues 17–32 (ELIR…EKSP) and 52–73 (SENH…REAF). An interaction with AES and TLE4-A region spans residues 109–312 (LGGHYLPNGA…SPNLHTKSNM (204 aa)). The segment at residues 324-392 (IKKPLNAFML…LHSQLYPSWS (69 aa)) is a DNA-binding region (HMG box). Positions 407–416 (KQSPEMETHT) are enriched in basic and acidic residues. The segment at 408–554 (QSPEMETHTK…PLSLVTKSSD (147 aa)) is interaction with CTBP-B. Low complexity predominate over residues 445 to 464 (SPATPSAALASPAAPAATHS). A compositionally biased stretch (polar residues) spans 465–474 (EQAQPLSLTT).

It belongs to the TCF/LEF family. As to quaternary structure, interacts with csnk1e, ctnnb1-A, ctbp-B, dact1-A and gsk3b. May interact with ase and tle4-A. In terms of processing, phosphorylated. Phosphorylation by csnk1e promotes binding to ctnnb1-A while phosphorylation by gsk3b may reverse this effect.

It is found in the cytoplasm. Its subcellular location is the nucleus. Functionally, participates in the Wnt signaling pathway. Binds to DNA and acts as a repressor in the absence of ctnnb1-A and possibly ctnnb1-B, and as an activator in the presence of these proteins. Required early in development for the establishment of the dorsal body axis in response to maternal Wnt signaling. Also required during development of the CNS for the establishment of dorsal-ventral patterning in the prospective diencephalon. The protein is Transcription factor 7-like 1-A (tcf7l1-a) of Xenopus laevis (African clawed frog).